Reading from the N-terminus, the 454-residue chain is Ig mu chain C region (454 aa).

Residues 1-105 are CH1; that stretch reads SPSSPTVFPL…NKDLRVPIPV (105 aa). C27 and C88 form a disulfide bridge. N-linked (GlcNAc...) asparagine glycans are attached at residues N45, N112, N192, N210, N238, N257, and N280. Residues 106–218 are CH2; it reads VTEMNPNVSV…KNVSSTCAAS (113 aa). C135 and C198 form a disulfide bridge. Positions 219 to 324 are CH3; the sequence is PSTDIQAFPI…QKKFISKPRE (106 aa). Intrachain disulfides connect C245–C304 and C352–C414. Residues 325-454 are CH4; it reads MNKTPPAVYQ…IMSDAGGTCY (130 aa). A glycan (N-linked (GlcNAc...) asparagine) is linked at N441.

This Mesocricetus auratus (Golden hamster) protein is Ig mu chain C region.